Reading from the N-terminus, the 157-residue chain is Snaclec A16 (157 aa).

Positions 1 to 23 (MGRLISVSFGLLVVFLSLSGTGA) are cleaved as a signal peptide. Disulfide bonds link Cys-27–Cys-38, Cys-55–Cys-149, and Cys-124–Cys-141. Residues 34-150 (YEGHCYKVFN…CELAYHFICM (117 aa)) form the C-type lectin domain.

Belongs to the snaclec family. Heterodimer; disulfide-linked. As to expression, expressed by the venom gland.

The protein resides in the secreted. Interferes with one step of hemostasis (modulation of platelet aggregation, or coagulation cascade, for example). This is Snaclec A16 from Macrovipera lebetinus (Levantine viper).